We begin with the raw amino-acid sequence, 105 residues long: Large ribosomal subunit protein uL24 (105 aa).

This sequence belongs to the universal ribosomal protein uL24 family. As to quaternary structure, part of the 50S ribosomal subunit.

Its function is as follows. One of two assembly initiator proteins, it binds directly to the 5'-end of the 23S rRNA, where it nucleates assembly of the 50S subunit. In terms of biological role, one of the proteins that surrounds the polypeptide exit tunnel on the outside of the subunit. The protein is Large ribosomal subunit protein uL24 of Parvibaculum lavamentivorans (strain DS-1 / DSM 13023 / NCIMB 13966).